The primary structure comprises 156 residues: Flagellar assembly factor FliW (156 aa).

This sequence belongs to the FliW family. In terms of assembly, interacts with translational regulator CsrA and flagellin(s).

Its subcellular location is the cytoplasm. In terms of biological role, acts as an anti-CsrA protein, binds CsrA and prevents it from repressing translation of its target genes, one of which is flagellin. Binds to flagellin and participates in the assembly of the flagellum. The sequence is that of Flagellar assembly factor FliW from Lachnoclostridium phytofermentans (strain ATCC 700394 / DSM 18823 / ISDg) (Clostridium phytofermentans).